Reading from the N-terminus, the 313-residue chain is Beta-lactamase (313 aa).

The first 15 residues, 1–15, serve as a signal peptide directing secretion; sequence MQRIGVTDYTILGTV. Ser190 functions as the Acyl-ester intermediate in the catalytic mechanism.

The protein belongs to the class-C beta-lactamase family.

It carries out the reaction a beta-lactam + H2O = a substituted beta-amino acid. In terms of biological role, upon expression in E.coli enables the latter to utilize penicillin as a carbon source. The polypeptide is Beta-lactamase (penA) (Burkholderia multivorans (strain ATCC 17616 / 249)).